The sequence spans 355 residues: Peptide chain release factor 1 (355 aa).

Gln-233 is modified (N5-methylglutamine). A disordered region spans residues 280-310 (ERRKKEQKRANNRRGQVGSGDRSERIRTYNF).

This sequence belongs to the prokaryotic/mitochondrial release factor family. Post-translationally, methylated by PrmC. Methylation increases the termination efficiency of RF1.

It localises to the cytoplasm. Functionally, peptide chain release factor 1 directs the termination of translation in response to the peptide chain termination codons UAG and UAA. This chain is Peptide chain release factor 1, found in Rickettsia canadensis (strain McKiel).